The chain runs to 860 residues: MKSSEIRQAFLNYFVQRGHQLVASSSLIPSNDPTLLFTNAGMVQFKDLFLGLETRPYQRAVTAQRCVRAGGKHNDLENVGYTARHHTFFEMLGNFSFGDYFKREAIQYAWEFLTEVLHIPAERLWVTVYKEDLEAEGIWLKEMKVSPERFSRCGEKDNFWSMGDTGPCGPCTEIFYDHGPEVAGGPPGSPDEDGDRYIEIWNLVFMQFNRDREGCLHPLPKPSVDTGMGLERLAAVIQGVHSNYEIDSFQYLIKAIAQLGQDIDLNHTSLKVIADHIRSCSFLIVDGVLPSNEGRGYVLRRIIRRAVRHGNKLGLPSPFFFKLVQPLIDVMGDAYPELINSKAHIERILQQEENQFTRTLEQGLRLLQDHIKNLKGQELSGEVAFKLYDTYGFPIDLTADIIREQGLHIDMEAFNQLMQQQREQSQAASQFTTDYHAVSQLDHQSEFHGYEKESMEAKIIGLLQEGNEVKSLNKGAKGAVILDHTPFYAESGGQVGDKGLLIGKEFSFQVDDTQKVGQAVVHYGEVIKGELTLDLSIHAQVDHIRRDAIRLNHTATHLLHAALKQIVGQHVQQRGSLVDAERARFDFSHFEPLTPQQIQQIEEVVNAQIRANNEVITQVMDIESAKQSGAVALFGEKYSDAVRVLSMGDFSKELCGGTHARRTGDIGLFKIVAEYGIASGIRRVEMVTGRYALAWVNEQLGFMNNLAATLKTTPNSLQEKVSQLLLDNKNQEKMIAKLLSEKAQKSGADILGEIEEIKGINLLIKQLEGMDSQTMRHTMDQLKSRIDSAVIILFTIEQNKMNVIAGVSKNIIGKTPNAAQLVRHLCGKGGGRDDMAQGGGDVPEDLNSKIKEIKEMIEKN.

Residues H553, H557, C655, and H659 each coordinate Zn(2+).

The protein belongs to the class-II aminoacyl-tRNA synthetase family. Zn(2+) is required as a cofactor.

It is found in the cytoplasm. The enzyme catalyses tRNA(Ala) + L-alanine + ATP = L-alanyl-tRNA(Ala) + AMP + diphosphate. Functionally, catalyzes the attachment of alanine to tRNA(Ala) in a two-step reaction: alanine is first activated by ATP to form Ala-AMP and then transferred to the acceptor end of tRNA(Ala). Also edits incorrectly charged Ser-tRNA(Ala) and Gly-tRNA(Ala) via its editing domain. This is Alanine--tRNA ligase from Legionella pneumophila (strain Lens).